Here is a 313-residue protein sequence, read N- to C-terminus: UPF0761 membrane protein VV0203 (313 aa).

6 consecutive transmembrane segments (helical) span residues 41–61, 104–124, 139–159, 185–205, 215–235, and 249–269; these read YLAY…LSIL, MTAV…SNID, AVFS…LVGA, LLRW…YLLV, AVVG…GFAA, and ALAA…IVLI. Residues 293–313 are disordered; it reads LPNNDTELEKDTQRDRFDSES. The span at 299 to 313 shows a compositional bias: basic and acidic residues; that stretch reads ELEKDTQRDRFDSES.

Belongs to the UPF0761 family.

It localises to the cell inner membrane. The protein is UPF0761 membrane protein VV0203 of Vibrio vulnificus (strain YJ016).